The primary structure comprises 125 residues: UPF0738 protein GK0828 (125 aa).

It belongs to the UPF0738 family.

In Geobacillus kaustophilus (strain HTA426), this protein is UPF0738 protein GK0828.